The sequence spans 260 residues: Acyl-coenzyme A diphosphatase FITM2 (260 aa).

Residues 1–23 are Cytoplasmic-facing; the sequence is MERLENCAQMFQRKFLNEAFRRH. Residues 24–44 form a helical membrane-spanning segment; sequence CPVLLACIALGGSLLKELSPL. Topologically, residues 45-57 are lumenal; that stretch reads PDSYWNNKRNVLN. A helical transmembrane segment spans residues 58–78; it reads VYFVKFCWGWTLWLLLPFITL. Residues 79–93 are Cytoplasmic-facing; it reads TNYKLTGSITKVLRR. Residues 94–114 traverse the membrane as a helical segment; it reads LSSLLVGTLFWYLCTNLFLYI. Residues 115–144 are Lumenal-facing; the sequence is EHITGSCYESEALLDSIEHQDRKECRLHGG. Residues 145–165 form a helical membrane-spanning segment; sequence FWHGFDISGHCFLLSYCILII. His154 is an active-site residue. The Cytoplasmic segment spans residues 166–189; the sequence is LEETSVIRSIQFERHWHRMAINAQ. The next 2 helical transmembrane spans lie at 190–210 and 211–231; these read FTAL…TAVY and FHNI…WYIT. The active site involves His212. Residues 232 to 260 are Cytoplasmic-facing; sequence YRWWYLQPISPGLPPASASHSEKEPVYKN.

It belongs to the FIT family. FIT2 subfamily.

It is found in the endoplasmic reticulum membrane. It catalyses the reaction an acyl-CoA + H2O = an acyl-4'-phosphopantetheine + adenosine 3',5'-bisphosphate + 2 H(+). Fatty acyl-coenzyme A (CoA) diphosphatase that hydrolyzes fatty acyl-CoA to yield acyl-4'-phosphopantetheine and adenosine 3',5'-bisphosphate. Preferentially hydrolyzes unsaturated long-chain acyl-CoA substrates in the endoplasmic reticulum (ER) lumen. This catalytic activity is required for maintaining ER structure and for lipid droplets (LDs) biogenesis, which are lipid storage organelles involved in maintaining lipid and energy homeostasis. May directly bind to diacylglycerol (DAGs) and triacylglycerol, which is also important for LD biogenesis. May support directional budding of nacent LDs from the ER into the cytosol by reducing DAG levels at sites of LD formation. May play a role in the regulation of cell morphology, ER morphology and cytoskeletal organization. This chain is Acyl-coenzyme A diphosphatase FITM2, found in Xenopus laevis (African clawed frog).